Here is a 99-residue protein sequence, read N- to C-terminus: MALTLTDVKRIAHLARLEMADADAEHMLGQLNEFFGLVEQMQAVDTAGIAPLAHPIEQIQEVAQRLRDDAVTEVVDRDDNQRPAPAVQDGLYLVPKVIE.

Belongs to the GatC family. Heterotrimer of A, B and C subunits.

The catalysed reaction is L-glutamyl-tRNA(Gln) + L-glutamine + ATP + H2O = L-glutaminyl-tRNA(Gln) + L-glutamate + ADP + phosphate + H(+). It catalyses the reaction L-aspartyl-tRNA(Asn) + L-glutamine + ATP + H2O = L-asparaginyl-tRNA(Asn) + L-glutamate + ADP + phosphate + 2 H(+). Functionally, allows the formation of correctly charged Asn-tRNA(Asn) or Gln-tRNA(Gln) through the transamidation of misacylated Asp-tRNA(Asn) or Glu-tRNA(Gln) in organisms which lack either or both of asparaginyl-tRNA or glutaminyl-tRNA synthetases. The reaction takes place in the presence of glutamine and ATP through an activated phospho-Asp-tRNA(Asn) or phospho-Glu-tRNA(Gln). The protein is Aspartyl/glutamyl-tRNA(Asn/Gln) amidotransferase subunit C of Burkholderia cenocepacia (strain ATCC BAA-245 / DSM 16553 / LMG 16656 / NCTC 13227 / J2315 / CF5610) (Burkholderia cepacia (strain J2315)).